A 498-amino-acid chain; its full sequence is Fascin-3 (498 aa).

It belongs to the fascin family. Expressed in testis.

Its subcellular location is the cytoplasm. It localises to the cytoskeleton. Functionally, acts as an actin bundling protein. The sequence is that of Fascin-3 (FSCN3) from Homo sapiens (Human).